The following is a 211-amino-acid chain: ATP phosphoribosyltransferase (211 aa).

It belongs to the ATP phosphoribosyltransferase family. Short subfamily. In terms of assembly, heteromultimer composed of HisG and HisZ subunits.

It localises to the cytoplasm. It carries out the reaction 1-(5-phospho-beta-D-ribosyl)-ATP + diphosphate = 5-phospho-alpha-D-ribose 1-diphosphate + ATP. It participates in amino-acid biosynthesis; L-histidine biosynthesis; L-histidine from 5-phospho-alpha-D-ribose 1-diphosphate: step 1/9. Catalyzes the condensation of ATP and 5-phosphoribose 1-diphosphate to form N'-(5'-phosphoribosyl)-ATP (PR-ATP). Has a crucial role in the pathway because the rate of histidine biosynthesis seems to be controlled primarily by regulation of HisG enzymatic activity. The sequence is that of ATP phosphoribosyltransferase from Pseudomonas putida (strain ATCC 47054 / DSM 6125 / CFBP 8728 / NCIMB 11950 / KT2440).